We begin with the raw amino-acid sequence, 346 residues long: Uroporphyrinogen decarboxylase (346 aa).

Substrate is bound by residues 26–30 (RQAGR), aspartate 76, tyrosine 153, serine 208, and histidine 323.

The protein belongs to the uroporphyrinogen decarboxylase family. Homodimer.

Its subcellular location is the cytoplasm. It catalyses the reaction uroporphyrinogen III + 4 H(+) = coproporphyrinogen III + 4 CO2. Its pathway is porphyrin-containing compound metabolism; protoporphyrin-IX biosynthesis; coproporphyrinogen-III from 5-aminolevulinate: step 4/4. In terms of biological role, catalyzes the decarboxylation of four acetate groups of uroporphyrinogen-III to yield coproporphyrinogen-III. The polypeptide is Uroporphyrinogen decarboxylase (Prochlorococcus marinus (strain MIT 9301)).